Reading from the N-terminus, the 412-residue chain is Citrate synthase (412 aa).

Active-site residues include histidine 305 and aspartate 364.

The protein belongs to the citrate synthase family.

The enzyme catalyses oxaloacetate + acetyl-CoA + H2O = citrate + CoA + H(+). The protein operates within carbohydrate metabolism; tricarboxylic acid cycle; isocitrate from oxaloacetate: step 1/2. The sequence is that of Citrate synthase (gltA) from Rickettsia bellii.